The sequence spans 313 residues: Cobalamin biosynthesis protein CobD (313 aa).

5 helical membrane passes run V52–L72, C79–A99, V154–I174, Y204–S224, and A289–Y309.

This sequence belongs to the CobD/CbiB family.

The protein localises to the cell membrane. The protein operates within cofactor biosynthesis; adenosylcobalamin biosynthesis. Functionally, converts cobyric acid to cobinamide by the addition of aminopropanol on the F carboxylic group. In Mycobacterium bovis (strain ATCC BAA-935 / AF2122/97), this protein is Cobalamin biosynthesis protein CobD.